We begin with the raw amino-acid sequence, 190 residues long: Large ribosomal subunit protein bL25 (190 aa).

The protein belongs to the bacterial ribosomal protein bL25 family. CTC subfamily. Part of the 50S ribosomal subunit; part of the 5S rRNA/L5/L18/L25 subcomplex. Contacts the 5S rRNA. Binds to the 5S rRNA independently of L5 and L18.

This is one of the proteins that binds to the 5S RNA in the ribosome where it forms part of the central protuberance. This Neisseria meningitidis serogroup A / serotype 4A (strain DSM 15465 / Z2491) protein is Large ribosomal subunit protein bL25.